Here is a 300-residue protein sequence, read N- to C-terminus: Transcription factor E2F5 (300 aa).

The DNA-binding element occupies 2–73; the sequence is GSSRHEKSLG…KNSIQWKGVG (72 aa). Residues 31 to 53 form a leucine-zipper region; sequence LKAAADTLAVRQKRRIYDITNVL. A DEF box motif is present at residues 36 to 73; it reads DTLAVRQKRRIYDITNVLEGIDLIEKKSKNSIQWKGVG. The dimerization stretch occupies residues 74–170; it reads AGCNTKEVID…GQNGQKKYQI (97 aa). Residues 191 to 250 are disordered; that stretch reads SKPVVFPVPPPDDLTQPSSQSSTSVTPPKSTMAAQNLPEQHVSERSQNFQQTPATEISSG. The span at 203–221 shows a compositional bias: low complexity; it reads DLTQPSSQSSTSVTPPKST. The segment covering 235 to 246 has biased composition (polar residues); the sequence is RSQNFQQTPATE. Residues 242–300 are transactivation; that stretch reads TPATEISSGSISGDIIDELMSSDVFPLLRLSPTPADDYNFNLDDNEGVCDLFDVQILNY. An RBL2 association region spans residues 277–294; that stretch reads DDYNFNLDDNEGVCDLFD.

Belongs to the E2F/DP family. In terms of assembly, component of the DRTF1/E2F transcription factor complex. Binds cooperatively with DP-1 to E2F sites. Interaction with retinoblastoma protein RB1 or proteins RBL1 and RBL2 inhibits the E2F transactivation domain. Component of the DREAM complex (also named LINC complex) at least composed of E2F4, E2F5, LIN9, LIN37, LIN52, LIN54, MYBL1, MYBL2, RBL1, RBL2, RBBP4, TFDP1 and TFDP2. The complex exists in quiescent cells where it represses cell cycle-dependent genes. It dissociates in S phase when LIN9, LIN37, LIN52 and LIN54 form a subcomplex that binds to MYBL2. As to expression, found in placenta followed by kidney, lung and brain.

It is found in the nucleus. Its function is as follows. Transcriptional activator that binds to E2F sites, these sites are present in the promoter of many genes whose products are involved in cell proliferation. May mediate growth factor-initiated signal transduction. It is likely involved in the early responses of resting cells to growth factor stimulation. Specifically required for multiciliate cell differentiation: together with MCIDAS and E2F5, binds and activate genes required for centriole biogenesis. The polypeptide is Transcription factor E2F5 (E2f5) (Rattus norvegicus (Rat)).